The sequence spans 229 residues: Triosephosphate isomerase (229 aa).

6 to 8 (NFK) provides a ligand contact to substrate. Residue His88 is the Electrophile of the active site. Glu157 serves as the catalytic Proton acceptor. Gly163 and Ser193 together coordinate substrate.

It belongs to the triosephosphate isomerase family. As to quaternary structure, homodimer.

The protein resides in the cytoplasm. The enzyme catalyses D-glyceraldehyde 3-phosphate = dihydroxyacetone phosphate. It functions in the pathway carbohydrate biosynthesis; gluconeogenesis. It participates in carbohydrate degradation; glycolysis; D-glyceraldehyde 3-phosphate from glycerone phosphate: step 1/1. Functionally, involved in the gluconeogenesis. Catalyzes stereospecifically the conversion of dihydroxyacetone phosphate (DHAP) to D-glyceraldehyde-3-phosphate (G3P). The sequence is that of Triosephosphate isomerase from Sulfurovum sp. (strain NBC37-1).